The primary structure comprises 404 residues: Protein translocase subunit SecD (404 aa).

The next 6 helical transmembrane spans lie at 7–27, 239–259, 262–282, 283–303, 330–350, and 357–377; these read HYIW…FNKV, LIAL…PGIV, IALL…GAAL, TLPG…SNVI, FPAI…LFFL, and GFAV…VFVS.

Belongs to the SecD/SecF family. SecD subfamily. As to quaternary structure, forms a complex with SecF. Part of the essential Sec protein translocation apparatus which comprises SecA, SecYEG and auxiliary proteins SecDF. Other proteins may also be involved.

It is found in the cell inner membrane. Part of the Sec protein translocase complex. Interacts with the SecYEG preprotein conducting channel. SecDF uses the proton motive force (PMF) to complete protein translocation after the ATP-dependent function of SecA. This is Protein translocase subunit SecD from Leptotrichia buccalis (strain ATCC 14201 / DSM 1135 / JCM 12969 / NCTC 10249 / C-1013-b).